We begin with the raw amino-acid sequence, 139 residues long: MANAASGMAVDDECKLKFLELKAKRTYRFIIYKIDEKKKMVVVEKVGEPVLNYDDFAASLPANECRYAIFDYDFVTEENCQKSKIFFIAWSPDTSRVRSKMIYASSKDRFKRELDGIQVELQATDPTEVGLDVIRGRAN.

Residues Gly7–Asn139 form the ADF-H domain.

This sequence belongs to the actin-binding proteins ADF family.

Actin-depolymerizing protein. Severs actin filaments (F-actin) and binds to actin monomers. The chain is Actin-depolymerizing factor 7 (ADF7) from Oryza sativa subsp. japonica (Rice).